Consider the following 159-residue polypeptide: Ribosomal RNA large subunit methyltransferase H (159 aa).

S-adenosyl-L-methionine is bound by residues Leu-76, Gly-108, and 127-132; that span reads FSKMTF.

It belongs to the RNA methyltransferase RlmH family. In terms of assembly, homodimer.

It is found in the cytoplasm. The enzyme catalyses pseudouridine(1915) in 23S rRNA + S-adenosyl-L-methionine = N(3)-methylpseudouridine(1915) in 23S rRNA + S-adenosyl-L-homocysteine + H(+). In terms of biological role, specifically methylates the pseudouridine at position 1915 (m3Psi1915) in 23S rRNA. The protein is Ribosomal RNA large subunit methyltransferase H of Bacillus velezensis (strain DSM 23117 / BGSC 10A6 / LMG 26770 / FZB42) (Bacillus amyloliquefaciens subsp. plantarum).